A 325-amino-acid polypeptide reads, in one-letter code: MSQPFVLAVPSKGRLQENAEAFFARAGLTLAKSGGARDYRGTIVGLDNVEVAYLSASEIAANLARGSVHFGVTGEDLIRESIVDADKRVALIDGLGFGRADVVVAVPQAWIDVRTMADLDDVTTGFRAQHNRRMRVATKYINLTRGFFASHGVVDYRIVESAGATEGAPAVGTAELIVDITTTGATLAANGLRVLDDGVMLRSQANLVASREADWTDATRETARIILDHIASRARAGKFKEVRTRFSGCNDALLAEAHAKFGVVSPFGGPTSSGMLTLHCPPAQLYGLSSFLRGHGAETVSVVSLDYVMDRENPLFAKLEAFLRS.

It belongs to the ATP phosphoribosyltransferase family. Long subfamily. The cofactor is Mg(2+).

It is found in the cytoplasm. The enzyme catalyses 1-(5-phospho-beta-D-ribosyl)-ATP + diphosphate = 5-phospho-alpha-D-ribose 1-diphosphate + ATP. It participates in amino-acid biosynthesis; L-histidine biosynthesis; L-histidine from 5-phospho-alpha-D-ribose 1-diphosphate: step 1/9. Feedback inhibited by histidine. In terms of biological role, catalyzes the condensation of ATP and 5-phosphoribose 1-diphosphate to form N'-(5'-phosphoribosyl)-ATP (PR-ATP). Has a crucial role in the pathway because the rate of histidine biosynthesis seems to be controlled primarily by regulation of HisG enzymatic activity. In Rhodopseudomonas palustris (strain BisA53), this protein is ATP phosphoribosyltransferase.